The chain runs to 333 residues: MNRLLSSAVNLLLVLVLGVGLSGCVSTRVPTASSSPWKAIDLETQANPLDVSFTDPSHGFLVGSNRMIRETDDGGAHWNDRSLDLPDEENFRLISIDFEGQEGWIAGQPGLLMHSTDGGQNWTRLFLDTKLPGEPYLITALGKSSAELATNVGAVYKTNDGGESWEASVTDAAGAVRDLRRSSNGSYVSVSGLGNFYATWEPGETVWKVHQRVSSQRLQSIGYQPDGNLWMVARGAQIRLNDGDGNVEDWSKAIIPITNGYGYMDMAWDDDGGIWAGGGNGTLLVSHDGGDSWETDPVGDQQPSNFTRFVFDDDHAFVLGERGNLLRWVGNAV.

The N-terminal stretch at 1–23 (MNRLLSSAVNLLLVLVLGVGLSG) is a signal peptide. Cys-24 carries the N-palmitoyl cysteine lipid modification. A lipid anchor (S-diacylglycerol cysteine) is attached at Cys-24.

This sequence belongs to the Ycf48 family. Part of early PSII assembly complexes which includes D1 (psbA) and PsbI; not found in mature PSII. Binds to the lumenal side of PSII complexes. Interacts with YidC.

The protein localises to the cellular thylakoid membrane. Its function is as follows. A factor required for optimal assembly of photosystem II (PSII), acting in the early stages of PSII assembly. Also plays a role in replacement of photodamaged D1 (psbA). Assists YidC in synthesis of chlorophyll-binding proteins. This chain is Photosystem II assembly lipoprotein Ycf48, found in Synechococcus sp. (strain CC9902).